Here is a 91-residue protein sequence, read N- to C-terminus: CRISPR-associated endoribonuclease Cas2 2 (91 aa).

Mg(2+) is bound at residue Asp-8.

Belongs to the CRISPR-associated endoribonuclease Cas2 protein family. Homodimer, forms a heterotetramer with a Cas1 homodimer. The cofactor is Mg(2+).

In terms of biological role, CRISPR (clustered regularly interspaced short palindromic repeat), is an adaptive immune system that provides protection against mobile genetic elements (viruses, transposable elements and conjugative plasmids). CRISPR clusters contain sequences complementary to antecedent mobile elements and target invading nucleic acids. CRISPR clusters are transcribed and processed into CRISPR RNA (crRNA). Functions as a ssRNA-specific endoribonuclease. Involved in the integration of spacer DNA into the CRISPR cassette. The chain is CRISPR-associated endoribonuclease Cas2 2 from Pyrobaculum aerophilum (strain ATCC 51768 / DSM 7523 / JCM 9630 / CIP 104966 / NBRC 100827 / IM2).